Here is a 556-residue protein sequence, read N- to C-terminus: MKTDIEIAQSVALKPIAEIVEQVGIGFDDIELYGKYKAKLSFDKIEAVRSQKVGKLILVTAINPTPAGEGKSTMSIGLADALNKIGKKTMIALREPSLGPVMGIKGGAAGGGYAQVLPMEDINLHFTGDMHAITTANNALSALLDNHIHQGNELDIDQRRVIWKRVVDLNDRALRQVIVGLGSSVNGIPREDGFDITVASEIMAILCLATDLSDLKKRLSNIVVAYSRDRKPIYVKDLKIEGALTLILKDAIKPNLVQTIYGTPALVHGGPFANIAHGCNSVLATSTALRLADYVVTEAGFGADLGAEKFLDIKTPNLPTSPDAIVIVATLRALKMHGGVSKEDLSQENVKAVKRGFTNLERHVNNMRQYGVPVVVAINQFTADTESEIATLKTLCSNIDVAVELASVWEDGADGGLELAQTVANVIETQSSNYKRLYNDEDTIEEKIKKIVTKIYGGNKVHFGPKAQIQLKEFSDNGWDKMPICMAKTQYSFSDNPNLLGAPTDFDITVREFVPKTGAGFIVALTGDVLTMPGLPKKPAALNMDVLEDGTAIGLF.

65 to 72 (TPAGEGKS) serves as a coordination point for ATP.

It belongs to the formate--tetrahydrofolate ligase family.

The enzyme catalyses (6S)-5,6,7,8-tetrahydrofolate + formate + ATP = (6R)-10-formyltetrahydrofolate + ADP + phosphate. It functions in the pathway one-carbon metabolism; tetrahydrofolate interconversion. This Streptococcus agalactiae serotype III (strain NEM316) protein is Formate--tetrahydrofolate ligase.